Here is a 123-residue protein sequence, read N- to C-terminus: uncharacterized protein (123 aa).

The chain crosses the membrane as a helical span at residues 5 to 25; sequence GTLVILFAIILILCIMLLFYY.

It belongs to the asfivirus CP123L family.

Its subcellular location is the host membrane. The protein localises to the virion. This is an uncharacterized protein from Ornithodoros (relapsing fever ticks).